Consider the following 515-residue polypeptide: Anthranilate synthase component 1 (515 aa).

L-tryptophan is bound by residues Ser50 and 281–283 (PYM). 316–317 (GT) is a chorismate binding site. Residue Glu343 coordinates Mg(2+). Chorismate is bound by residues Tyr431, Arg451, 465–467 (GAG), and Gly467. Glu480 is a Mg(2+) binding site.

Belongs to the anthranilate synthase component I family. As to quaternary structure, heterotetramer consisting of two non-identical subunits: a beta subunit (TrpG) and a large alpha subunit (TrpE). Requires Mg(2+) as cofactor.

It catalyses the reaction chorismate + L-glutamine = anthranilate + pyruvate + L-glutamate + H(+). The protein operates within amino-acid biosynthesis; L-tryptophan biosynthesis; L-tryptophan from chorismate: step 1/5. With respect to regulation, feedback inhibited by tryptophan. In terms of biological role, part of a heterotetrameric complex that catalyzes the two-step biosynthesis of anthranilate, an intermediate in the biosynthesis of L-tryptophan. In the first step, the glutamine-binding beta subunit (TrpG) of anthranilate synthase (AS) provides the glutamine amidotransferase activity which generates ammonia as a substrate that, along with chorismate, is used in the second step, catalyzed by the large alpha subunit of AS (TrpE) to produce anthranilate. In the absence of TrpG, TrpE can synthesize anthranilate directly from chorismate and high concentrations of ammonia. The polypeptide is Anthranilate synthase component 1 (trpE) (Bacillus subtilis (strain 168)).